The sequence spans 129 residues: Lysozyme C, milk isozyme (129 aa).

A C-type lysozyme domain is found at 1–129 (KIFSKCELAR…LSKYLASCNL (129 aa)). Cystine bridges form between Cys-6–Cys-127, Cys-30–Cys-115, Cys-65–Cys-80, and Cys-76–Cys-94. Catalysis depends on residues Glu-35 and Asp-53. Ca(2+) is bound by residues Lys-82, Asp-85, Asn-87, Asp-90, and Asp-91.

This sequence belongs to the glycosyl hydrolase 22 family. Monomer. Requires Ca(2+) as cofactor.

It catalyses the reaction Hydrolysis of (1-&gt;4)-beta-linkages between N-acetylmuramic acid and N-acetyl-D-glucosamine residues in a peptidoglycan and between N-acetyl-D-glucosamine residues in chitodextrins.. Lysozymes have primarily a bacteriolytic function; those in tissues and body fluids are associated with the monocyte-macrophage system and enhance the activity of immunoagents. In Canis lupus familiaris (Dog), this protein is Lysozyme C, milk isozyme.